The chain runs to 249 residues: Methionine aminopeptidase (249 aa).

H77 lines the substrate pocket. Residues D94, D105, and H168 each contribute to the a divalent metal cation site. A substrate-binding site is contributed by H175. A divalent metal cation contacts are provided by E201 and E232.

It belongs to the peptidase M24A family. Methionine aminopeptidase type 1 subfamily. Monomer. It depends on Co(2+) as a cofactor. The cofactor is Zn(2+). Mn(2+) is required as a cofactor. Requires Fe(2+) as cofactor.

The catalysed reaction is Release of N-terminal amino acids, preferentially methionine, from peptides and arylamides.. Its function is as follows. Removes the N-terminal methionine from nascent proteins. The N-terminal methionine is often cleaved when the second residue in the primary sequence is small and uncharged (Met-Ala-, Cys, Gly, Pro, Ser, Thr, or Val). Requires deformylation of the N(alpha)-formylated initiator methionine before it can be hydrolyzed. The sequence is that of Methionine aminopeptidase from Clostridium perfringens (strain 13 / Type A).